A 323-amino-acid chain; its full sequence is CYFIP-related Rac1 interactor A (323 aa).

This sequence belongs to the CYRI family. As to quaternary structure, interacts with RAC1 (GTP-bound form preferentially).

It is found in the membrane. May negatively regulate RAC1 signaling and RAC1-driven cytoskeletal remodeling. May regulate chemotaxis, cell migration and epithelial polarization by controlling the polarity, plasticity, duration and extent of protrusions. The protein is CYFIP-related Rac1 interactor A (CYRIA) of Bos taurus (Bovine).